Reading from the N-terminus, the 481-residue chain is Surface lipoprotein assembly modifier 2 (481 aa).

The signal sequence occupies residues 1–24 (MKNGVKQLFLLSLIGLSLTNVAWA). An N-terminal domain region spans residues 24-192 (AEVARPKNDT…QYLLTLNQRN (169 aa)). The tract at residues 193-481 (QWIWQVGLNF…RIYLEIGKIF (289 aa)) is C-terminal probable beta barrel. The next 14 beta stranded transmembrane spans lie at 194–204 (WIWQVGLNFLN), 223–243 (AWEK…KKWP), 248–257 (FFSKTMFNGN), 271–281 (TVRIGGGLGYQ), 285–295 (VEVSLFPFQEK), 315–325 (LGIRLENVDWL), 329–339 (WQISTALEYGE), 353–363 (YFVSSTLFYLP), 368–377 (FWFVGMDFHR), 390–399 (KTLRLGWGQD), 404–414 (ISSRLTFSYAN), 432–441 (YTTTITLWHR), 448–458 (LTPKLSWDYQK), and 471–481 (NRIYLEIGKIF).

The protein belongs to the Slam family.

It localises to the cell outer membrane. Functionally, required for correct export to the cell surface of some cell outer membrane lipoproteins. This Haemophilus influenzae (strain ATCC 51907 / DSM 11121 / KW20 / Rd) protein is Surface lipoprotein assembly modifier 2.